Here is a 321-residue protein sequence, read N- to C-terminus: Olfactory receptor 3A3 (321 aa).

At 1–34 the chain is on the extracellular side; that stretch reads MSLQKLMEPEAGTNRTAVAEFILLGLVQTEEMQP. A glycan (N-linked (GlcNAc...) asparagine) is linked at N14. A helical transmembrane segment spans residues 35–58; sequence VVFVLLLFAYLVTTGGNLSILAAV. Topologically, residues 59-66 are cytoplasmic; it reads LVEPKLHA. Residues 67–88 traverse the membrane as a helical segment; sequence PMYFFLGNLSVLDVGCITVTVP. The Extracellular portion of the chain corresponds to 89 to 109; it reads AMLGRLLSHKSTISYDACLSQ. A disulfide bond links C106 and C198. Residues 110–129 traverse the membrane as a helical segment; it reads LFFFHLLAGMDCFLLTAMAY. At 130–149 the chain is on the cytoplasmic side; the sequence is DRLLAICQPLTYSTRMSQTV. The chain crosses the membrane as a helical span at residues 150 to 167; sequence QRMLVAASWACAFTNALT. Topologically, residues 168 to 205 are extracellular; that stretch reads HTVAMSTLNFCGPNEVNHFYCDLPQLFQLSCSSTQLNE. A helical transmembrane segment spans residues 206 to 228; it reads LLLFVAAAFMAVAPLVFISVSYA. Residues 229–245 are Cytoplasmic-facing; it reads HVVAAVLQIRSAEGRKK. The chain crosses the membrane as a helical span at residues 246–268; sequence AFSTCGSHLTVVGIFYGTGVFSY. Over 269-281 the chain is Extracellular; it reads MRLGSVESSDKDK. A helical transmembrane segment spans residues 282–301; it reads GVGVFMTVINPMLNPLIYSL. The Cytoplasmic segment spans residues 302–321; the sequence is RNTDVQGALCQLLVGKRSLT.

The protein belongs to the G-protein coupled receptor 1 family.

The protein resides in the cell membrane. Functionally, odorant receptor. This chain is Olfactory receptor 3A3 (OR3A3), found in Homo sapiens (Human).